A 298-amino-acid polypeptide reads, in one-letter code: 4-hydroxy-tetrahydrodipicolinate synthase (298 aa).

T51 contacts pyruvate. Y139 functions as the Proton donor/acceptor in the catalytic mechanism. The active-site Schiff-base intermediate with substrate is the K167. Residue I209 coordinates pyruvate.

The protein belongs to the DapA family. In terms of assembly, homotetramer; dimer of dimers.

It localises to the cytoplasm. The enzyme catalyses L-aspartate 4-semialdehyde + pyruvate = (2S,4S)-4-hydroxy-2,3,4,5-tetrahydrodipicolinate + H2O + H(+). It functions in the pathway amino-acid biosynthesis; L-lysine biosynthesis via DAP pathway; (S)-tetrahydrodipicolinate from L-aspartate: step 3/4. Its function is as follows. Catalyzes the condensation of (S)-aspartate-beta-semialdehyde [(S)-ASA] and pyruvate to 4-hydroxy-tetrahydrodipicolinate (HTPA). The sequence is that of 4-hydroxy-tetrahydrodipicolinate synthase from Histophilus somni (strain 129Pt) (Haemophilus somnus).